We begin with the raw amino-acid sequence, 187 residues long: MYEAIFDLEAITPLFMRGADARSPEFSSASVKGVMRWWFRALAGGYFGNNIEALKEVEEKIFGSTRNKSRVFVRAEVEDVKKGNIYRQASSWADKTIIVWSEYVDYFFFSVLDKRRNRKTKKIDIKTRFEYFDVGSKFSISLSSTDERYFRLAEASLWMTINLGGFGFRARRGAGSLKVQMLREMLL.

The protein belongs to the CRISPR system Cmr1 family. Part of the type III-B Cmr ribonucleoprotein (RNP) complex. This is an elongated RNP with Cmr2 and Cmr3 as the base, with Cmr4 and Cmr5 forming a helical core along the mature crRNA (39 or 45 nt in length), while the complex is capped by Cmr6 and Cmr1. The 5' end of the crRNA is bound to Cmr2 and Cmr3, while Cmr6 and a Cmr1 subunit (Cmr1-1 or Cmr1-2) cap the 3' end of the crRNA. The target RNA lies antiparallel to the crRNA, with its 5' end near Cmr1 and Cmr6 and its 3' end near Cmr2 and Cmr3; major target cleavage occurs nears the junction of Cmr1/Cmr6 and Cmr4/Cmr, with minor cleavage occurring at 6 nt intervals which coincide with the proposed spacing of Cmr4 subunits.

Its subcellular location is the cytoplasm. Functionally, CRISPR (clustered regularly interspaced short palindromic repeat), is an adaptive immune system that provides protection against mobile genetic elements (viruses, transposable elements and conjugative plasmids). CRISPR clusters contain sequences complementary to antecedent mobile elements and target invading nucleic acids. CRISPR clusters are transcribed and processed into CRISPR RNA (crRNA), formerly called psiRNA (prokaryotic silencing) in this organism. Part of the Cmr ribonucleoprotein complex which has divalent cation-dependent endoribonuclease activity specific for ssRNA complementary to the crRNA (target RNA), generating 5' hydroxy- and 3' phosphate or 2'-3' cyclic phosphate termini. Cmr4 is probably the subunit that cleaves target RNA. Cmr complex does not cleave ssDNA complementary to the crRNA. Cleavage of invading RNA is guided by the crRNA; substrate cleavage occurs a fixed distance (14 nt) from the 3' end of the crRNA. In vitro reconstitution shows Cmr1-2 and Cmr5 are not absolutely necessary for target cleavage. The protein is CRISPR system Cmr subunit Cmr1-2 of Pyrococcus furiosus (strain ATCC 43587 / DSM 3638 / JCM 8422 / Vc1).